Here is a 486-residue protein sequence, read N- to C-terminus: Glutamyl-tRNA(Gln) amidotransferase subunit A (486 aa).

The Charge relay system role is filled by lysine 77. Residues 130–158 (SGENSSVKPTKNAWDQTKVPGGSSSGSAA) form a disordered region. Polar residues predominate over residues 132–144 (ENSSVKPTKNAWD). Serine 152 acts as the Charge relay system in catalysis. Serine 176 acts as the Acyl-ester intermediate in catalysis.

It belongs to the amidase family. GatA subfamily. Heterotrimer of A, B and C subunits.

It carries out the reaction L-glutamyl-tRNA(Gln) + L-glutamine + ATP + H2O = L-glutaminyl-tRNA(Gln) + L-glutamate + ADP + phosphate + H(+). Allows the formation of correctly charged Gln-tRNA(Gln) through the transamidation of misacylated Glu-tRNA(Gln) in organisms which lack glutaminyl-tRNA synthetase. The reaction takes place in the presence of glutamine and ATP through an activated gamma-phospho-Glu-tRNA(Gln). The polypeptide is Glutamyl-tRNA(Gln) amidotransferase subunit A (gatA) (Lactococcus lactis subsp. lactis (strain IL1403) (Streptococcus lactis)).